The following is a 282-amino-acid chain: Pantothenate synthetase (282 aa).

30–37 (MGYLHEGH) contacts ATP. H37 (proton donor) is an active-site residue. A (R)-pantoate-binding site is contributed by Q61. Q61 contacts beta-alanine. 147-150 (GMKD) contributes to the ATP binding site. Q153 is a binding site for (R)-pantoate. Residues V176 and 184-187 (KSSR) each bind ATP.

It belongs to the pantothenate synthetase family. As to quaternary structure, homodimer.

It is found in the cytoplasm. The catalysed reaction is (R)-pantoate + beta-alanine + ATP = (R)-pantothenate + AMP + diphosphate + H(+). The protein operates within cofactor biosynthesis; (R)-pantothenate biosynthesis; (R)-pantothenate from (R)-pantoate and beta-alanine: step 1/1. Functionally, catalyzes the condensation of pantoate with beta-alanine in an ATP-dependent reaction via a pantoyl-adenylate intermediate. This is Pantothenate synthetase from Bacillus cereus (strain AH187).